Consider the following 98-residue polypeptide: uncharacterized protein (98 aa).

In terms of domain architecture, MOSC spans 30–98 (KKVVPSVKIH…RRKFCRVRLE (69 aa)).

This is an uncharacterized protein from Haemophilus influenzae (strain ATCC 51907 / DSM 11121 / KW20 / Rd).